The sequence spans 185 residues: MAEAQYIPRLKVQYLEKFRPELTEKFSYKNLLEVPRLDKIVLNMGVGEAVGDSKKIKSAFEDLQAIAGQKPVITKAKTSIATFKLREGMPIGVKVTLRKDRMYEFLDRLVTVALPRVRDFRGLNAKSFDGRGNYAMGLKEHIVFPEIDYDKVDQIWGMDIIVCTTAKTDDEARELLRKFNFPFTK.

It belongs to the universal ribosomal protein uL5 family. Part of the 50S ribosomal subunit; part of the 5S rRNA/L5/L18/L25 subcomplex. Contacts the 5S rRNA and the P site tRNA. Forms a bridge to the 30S subunit in the 70S ribosome.

Functionally, this is one of the proteins that bind and probably mediate the attachment of the 5S RNA into the large ribosomal subunit, where it forms part of the central protuberance. In the 70S ribosome it contacts protein S13 of the 30S subunit (bridge B1b), connecting the 2 subunits; this bridge is implicated in subunit movement. Contacts the P site tRNA; the 5S rRNA and some of its associated proteins might help stabilize positioning of ribosome-bound tRNAs. The chain is Large ribosomal subunit protein uL5 from Parvibaculum lavamentivorans (strain DS-1 / DSM 13023 / NCIMB 13966).